Consider the following 196-residue polypeptide: Protein GrpE (196 aa).

Residues 1 to 40 are disordered; it reads MSSKEQKTPEGQAPEEIIMDQHEEVEAVEPNDSAEQVDPR.

This sequence belongs to the GrpE family. Homodimer.

Its subcellular location is the cytoplasm. In terms of biological role, participates actively in the response to hyperosmotic and heat shock by preventing the aggregation of stress-denatured proteins, in association with DnaK and GrpE. It is the nucleotide exchange factor for DnaK and may function as a thermosensor. Unfolded proteins bind initially to DnaJ; upon interaction with the DnaJ-bound protein, DnaK hydrolyzes its bound ATP, resulting in the formation of a stable complex. GrpE releases ADP from DnaK; ATP binding to DnaK triggers the release of the substrate protein, thus completing the reaction cycle. Several rounds of ATP-dependent interactions between DnaJ, DnaK and GrpE are required for fully efficient folding. The protein is Protein GrpE of Salmonella enteritidis PT4 (strain P125109).